The chain runs to 154 residues: 6,7-dimethyl-8-ribityllumazine synthase (154 aa).

Residues Phe22, 56–58 (AFE), and 81–83 (VLI) contribute to the 5-amino-6-(D-ribitylamino)uracil site. 86 to 87 (ET) provides a ligand contact to (2S)-2-hydroxy-3-oxobutyl phosphate. His89 acts as the Proton donor in catalysis. Phe114 is a 5-amino-6-(D-ribitylamino)uracil binding site. Residue Arg128 participates in (2S)-2-hydroxy-3-oxobutyl phosphate binding.

Belongs to the DMRL synthase family.

It carries out the reaction (2S)-2-hydroxy-3-oxobutyl phosphate + 5-amino-6-(D-ribitylamino)uracil = 6,7-dimethyl-8-(1-D-ribityl)lumazine + phosphate + 2 H2O + H(+). It functions in the pathway cofactor biosynthesis; riboflavin biosynthesis; riboflavin from 2-hydroxy-3-oxobutyl phosphate and 5-amino-6-(D-ribitylamino)uracil: step 1/2. Catalyzes the formation of 6,7-dimethyl-8-ribityllumazine by condensation of 5-amino-6-(D-ribitylamino)uracil with 3,4-dihydroxy-2-butanone 4-phosphate. This is the penultimate step in the biosynthesis of riboflavin. This is 6,7-dimethyl-8-ribityllumazine synthase from Chlamydia abortus (strain DSM 27085 / S26/3) (Chlamydophila abortus).